Reading from the N-terminus, the 413-residue chain is MSTDPTSKPAFPITDEVRHALAVTKRGVDELLIEEEFAQKLAKSAATDKPLRIKLGLDPTAPDIHLGHTVVLNKMRQLQDLGHTVIFLIGDFTSLIGDPSGRNATRPPLTREQIESNAKTYFEQAALVLDRAKTEIRYNSEWSMPLGADGMIKLASRYTVARMLEREDFTKRFQGGIPISIHEFLYPLMQGYDSVALNADLELGGTDQKFNLLVGRELQKQYGQEQQCILTMPLLEGLDGVEKMSKSKGNYVGISEKPTDMFGKLMSISDVLMWRYFELLSFRSLDEIARFRGEAEGGRNPRDFKVMLAQEIVARFHSQADAERALEDFNHRAKGGVPDDIPAVTLAGAPLAIGQLLKQAGLVPSTSEALRNIEQGGVKIDGATVSDKALKVDAGEFVVQVGKRRFARVTLTA.

Residues 59–68 (PTAPDIHLGH) carry the 'HIGH' region motif. A 'KMSKS' region motif is present at residues 243–247 (KMSKS). Lys-246 is an ATP binding site. An S4 RNA-binding domain is found at 351–411 (LAIGQLLKQA…GKRRFARVTL (61 aa)).

This sequence belongs to the class-I aminoacyl-tRNA synthetase family. TyrS type 2 subfamily. As to quaternary structure, homodimer.

The protein localises to the cytoplasm. It catalyses the reaction tRNA(Tyr) + L-tyrosine + ATP = L-tyrosyl-tRNA(Tyr) + AMP + diphosphate + H(+). In terms of biological role, catalyzes the attachment of tyrosine to tRNA(Tyr) in a two-step reaction: tyrosine is first activated by ATP to form Tyr-AMP and then transferred to the acceptor end of tRNA(Tyr). This is Tyrosine--tRNA ligase from Burkholderia pseudomallei (strain 1710b).